Here is a 537-residue protein sequence, read N- to C-terminus: Putative cysteine ligase BshC (537 aa).

Residues 415–439 (EKASNNFINEVEEMKIQQQELYNNL) are a coiled coil.

The protein belongs to the BshC family.

Functionally, involved in bacillithiol (BSH) biosynthesis. May catalyze the last step of the pathway, the addition of cysteine to glucosamine malate (GlcN-Mal) to generate BSH. In Staphylococcus epidermidis (strain ATCC 12228 / FDA PCI 1200), this protein is Putative cysteine ligase BshC.